A 944-amino-acid polypeptide reads, in one-letter code: MQVNFDETCDSVIRMNANEQTRSANGIGNGNGESIPGIPDDLRCKRSDGKQWRCTAMSMADKTVCEKHYIQAKKRAANSAFRANQKKAKRRSSLGETDTYSEGKMDDFELPVTSIDHYNNGLASASKSNGRLEKRHNKSLMRYSPETPMMRSFSPRVAVDLNDDLGRDVVMFEEGYRSYRTPPSVAVMDPTRNRSHQSTSPMEYSAASTDVSAESLGEICHQCQRKDRERIISCLKCNQRAFCHNCLSARYSEISLEEVEKVCPACRGLCDCKSCLRSDNTIKVRIREIPVLDKLQYLYRLLSAVLPVIKQIHLEQCMEVELEKRLREVEIDLVRARLKADEQMCCNVCRIPVVDYYRHCPNCSYDLCLRCCQDLREESSVTISGTNQNVQDRKGAPKLKLNFSYKFPEWEANGDGSIPCPPKEYGGCGSHSLNLARIFKMNWVAKLVKNAEEIVSGCKLSDLLNPDMCDSRFCKFAEREESGDNYVYSPSLETIKTDGVAKFEQQWAEGRLVTVKMVLDDSSCSRWDPETIWRDIDELSDEKLREHDPFLKAINCLDGLEVDVRLGEFTRAYKDGKNQETGLPLLWKLKDWPSPSASEEFIFYQRPEFIRSFPFLEYIHPRLGLLNVAAKLPHYSLQNDSGPKIYVSCGTYQEISAGDSLTGIHYNMRDMVYLLVHTSEETTFERVRKTKPVPEEPDQKMSENESLLSPEQKLRDGELHDLSLGEASMEKNEPELALTVNPENLTENGDNMESSCTSSCAGGAQWDVFRRQDVPKLSGYLQRTFQKPDNIQTDFVSRPLYEGLFLNEHHKRQLRDEFGVEPWTFEQHRGEAIFIPAGCPFQITNLQSNIQVALDFLCPESVGESARLAEEIRCLPNDHEAKLQILEIGKISLYAASSAIKEVQKLVLDPKFGAELGFEDSNLTKAVSHNLDEATKRPQQNSCT.

Disordered stretches follow at residues 20 to 40 (QTRS…GIPD) and 77 to 103 (ANSA…YSEG). Positions 38 to 83 (IPDDLRCKRSDGKQWRCTAMSMADKTVCEKHYIQAKKRAANSAFRA) constitute a WRC domain. Residues 73-80 (KKRAANSA) carry the Nuclear localization signal 1 motif. The segment at 217 to 269 (GEICHQCQRKDRERIISCLKCNQRAFCHNCLSARYSEISLEEVEKVCPACRGL) adopts a PHD-type; atypical zinc-finger fold. Zn(2+) is bound by residues cysteine 220, cysteine 223, cysteine 234, cysteine 237, cysteine 243, cysteine 246, cysteine 263, and cysteine 266. The Nuclear localization signal 2 motif lies at 323-330 (EKRLREVE). The JmjC domain maps to 621–873 (PRLGLLNVAA…ESARLAEEIR (253 aa)). Over residues 685-703 (ERVRKTKPVPEEPDQKMSE) the composition is skewed to basic and acidic residues. Residues 685–715 (ERVRKTKPVPEEPDQKMSENESLLSPEQKLR) form a disordered region.

The protein belongs to the JARID1 histone demethylase family. Homodimer. Interacts with RDR2. Binds to CMT3. Associates with the E2 ubiquitin-conjugating enzyme UBC10. In terms of processing, self-ubiquitinates. Expressed in inflorescences, flowers, roots, siliques, leaves and stems, especially in the vasculature (mainly phloem), with highest levels in floral organs.

The protein localises to the nucleus. It catalyses the reaction S-ubiquitinyl-[E2 ubiquitin-conjugating enzyme]-L-cysteine + [acceptor protein]-L-lysine = [E2 ubiquitin-conjugating enzyme]-L-cysteine + N(6)-ubiquitinyl-[acceptor protein]-L-lysine.. Binds histone H3 but seems to have lost demethylase activity probably due to its inability to bind iron Fe(2+). Possesses E3 ubiquitin ligase activity and targets directly CMT3 for proteasomal degradation to initiate destabilization of the heterochromatic state (e.g. CHG cytosine methylation and H3K9me2) of endogenous silenced loci. Required for the removal of repressive H3K9me2 histone marks to facilitate the transcription of AtSN1, AtMu1c, solo LTR and SDC, thus counteracting their transcriptional silencing. Mainly required to promote the basal level transcription of silenced loci such as TE and repeats targeted by RNA-dependent DNA methylation (RdDM) for silencing, a specialized branch of the RNA interference (RNAi) pathway. Also cooperates with RNAi pathways for gene silencing both by contributing to the production of 24-nt siRNA to initiate RdDM and by recruiting RDR2 to enable local transcripts to make dsRNA. Antagonizes histone H3K9 demethylase IBM1/JMJ25 function. This is E3 ubiquitin-protein ligase JMJ24 from Arabidopsis thaliana (Mouse-ear cress).